The primary structure comprises 492 residues: Protein adenylyltransferase Fic (492 aa).

A compositionally biased stretch (low complexity) spans 1–17 (MCMEAEPPSPPAQQQEQ). The tract at residues 1 to 21 (MCMEAEPPSPPAQQQEQVNPP) is disordered. A helical transmembrane segment spans residues 33 to 55 (LYRLVLLFVAGSLAAWTFHALSS). 2 TPR repeats span residues 118–151 (ALGA…APRH) and 152–186 (PEVL…SPSN). The Inhibitory (S/T)XXXE(G/N) motif signature appears at 243-248 (SVGIEG). ATP is bound by residues glutamate 247 and 328-331 (VGGH). In terms of domain architecture, Fido spans 297–432 (ITIKDILELH…IRPFVRFIAD (136 aa)). Residue histidine 375 is part of the active site. ATP-binding positions include 379–386 (DGNGRTSR), 411–412 (YY), and asparagine 419.

It belongs to the fic family. As to quaternary structure, homodimer.

The protein resides in the membrane. It catalyses the reaction L-tyrosyl-[protein] + ATP = O-(5'-adenylyl)-L-tyrosyl-[protein] + diphosphate. It carries out the reaction L-threonyl-[protein] + ATP = 3-O-(5'-adenylyl)-L-threonyl-[protein] + diphosphate. The enzyme catalyses 3-O-(5'-adenylyl)-L-threonyl-[protein] + H2O = L-threonyl-[protein] + AMP + H(+). Its activity is regulated as follows. The side chain of Glu-247 determines which of the two opposing activities (AMPylase or de-AMPylase) will take place. In response to endoplasmic reticulum stress, mediates de-AMPylase activity. Adenylyltransferase activity is inhibited by the inhibitory helix present at the N-terminus: Glu-247 binds ATP and competes with ATP-binding at Arg-386, thereby preventing adenylyltransferase activity. In unstressed cells, disengagement of Glu-247 promotes adenylyltransferase activity. Activation dissociates ATP-binding from Glu-247, allowing ordered binding of the entire ATP moiety with the alpha-phosphate in an orientation that is productive for accepting an incoming target hydroxyl side chain. Functionally, protein that can both mediate the addition of adenosine 5'-monophosphate (AMP) to specific residues of target proteins (AMPylation), and the removal of the same modification from target proteins (de-AMPylation), depending on the context. The side chain of Glu-247 determines which of the two opposing activities (AMPylase or de-AMPylase) will take place. Acts as a key regulator of the unfolded protein response (UPR) by mediating AMPylation or de-AMPylation of Hsc70-3/BiP. In unstressed cells, acts as an adenylyltransferase by mediating AMPylation of Hsc70-3/BiP at 'Thr-518', thereby inactivating it. In response to endoplasmic reticulum stress, acts as a phosphodiesterase by mediating removal of ATP (de-AMPylation) from Hsc70-3/BiP at 'Thr-518', leading to restore HSPA5/BiP activity. This chain is Protein adenylyltransferase Fic, found in Drosophila simulans (Fruit fly).